The chain runs to 158 residues: Deoxyuridine 5'-triphosphate nucleotidohydrolase (158 aa).

Residues R66 to G68, N79, T83 to D85, and K93 contribute to the substrate site. Positions R139 to A158 are disordered.

This sequence belongs to the dUTPase family. It depends on Mg(2+) as a cofactor.

It catalyses the reaction dUTP + H2O = dUMP + diphosphate + H(+). It participates in pyrimidine metabolism; dUMP biosynthesis; dUMP from dCTP (dUTP route): step 2/2. Functionally, this enzyme is involved in nucleotide metabolism: it produces dUMP, the immediate precursor of thymidine nucleotides and it decreases the intracellular concentration of dUTP so that uracil cannot be incorporated into DNA. The protein is Deoxyuridine 5'-triphosphate nucleotidohydrolase of Helicobacter hepaticus (strain ATCC 51449 / 3B1).